Reading from the N-terminus, the 434-residue chain is UDP-N-acetylmuramoylalanine--D-glutamate ligase (434 aa).

An ATP-binding site is contributed by 117 to 123 (GTNGKST).

Belongs to the MurCDEF family.

It is found in the cytoplasm. It carries out the reaction UDP-N-acetyl-alpha-D-muramoyl-L-alanine + D-glutamate + ATP = UDP-N-acetyl-alpha-D-muramoyl-L-alanyl-D-glutamate + ADP + phosphate + H(+). The protein operates within cell wall biogenesis; peptidoglycan biosynthesis. Functionally, cell wall formation. Catalyzes the addition of glutamate to the nucleotide precursor UDP-N-acetylmuramoyl-L-alanine (UMA). The chain is UDP-N-acetylmuramoylalanine--D-glutamate ligase from Sphingopyxis alaskensis (strain DSM 13593 / LMG 18877 / RB2256) (Sphingomonas alaskensis).